The chain runs to 963 residues: Vacuolar membrane protease (963 aa).

Over 1–15 (MVSSRRGFNPIAFTP) the chain is Cytoplasmic. Residues 16–36 (WPVTILTSLVYLALIIPIIVV) form a helical membrane-spanning segment. Topologically, residues 37–391 (HHLVPPAPKQ…FQLNTLFGLS (355 aa)) are vacuolar. 2 N-linked (GlcNAc...) asparagine glycosylation sites follow: N111 and N114. Residues H170 and D182 each coordinate Zn(2+). The Proton acceptor role is filled by E216. E217, E242, and H315 together coordinate Zn(2+). A helical membrane pass occupies residues 392-412 (VALLVVAPLLLILTSVALFAV). Residues 413 to 441 (DKMYMFSMYTYLSESGGQVSLYGLRGMFR) are Cytoplasmic-facing. Residues 442-462 (FPLILGISTALTVALAFLIMK) traverse the membrane as a helical segment. Topologically, residues 463–473 (VNPFIIYSSPY) are vacuolar. Residues 474 to 494 (AVWSMMLSTCMFFAWFISCVA) traverse the membrane as a helical segment. At 495–504 (DFARPSALHR) the chain is on the cytoplasmic side. Residues 505-525 (AYAFSWMFGILWVFLVIATVY) traverse the membrane as a helical segment. The Vacuolar segment spans residues 526–535 (QRQHGIASSY). The chain crosses the membrane as a helical span at residues 536 to 556 (FIVFYFAGVSVATWISYLELF). Over 557–668 (GLSTTQDYAR…WSIYLVSSAW (112 aa)) the chain is Cytoplasmic. A disordered region spans residues 569–618 (SRLSDRTPSSDSHLLAPSADELPSSGSVAGRDFNPEDVEDEEPTESTSLL). Acidic residues predominate over residues 603–612 (PEDVEDEEPT). Residues 669-689 (ILQFLLVAPIVLILLGQLGLF) traverse the membrane as a helical segment. The Vacuolar segment spans residues 690–705 (LTSATYQIGADGGSQF). The helical transmembrane segment at 706–726 (IIYIGIAVLSVLILLPLFPFI) threads the bilayer. Residues 727–732 (HRFTYH) lie on the Cytoplasmic side of the membrane. A helical membrane pass occupies residues 733-753 (IPTFMLFVLIGTLVYNLTAFP). The Vacuolar segment spans residues 754–963 (FSHNSRLKVA…LVEGSYSFKL (210 aa)). An N-linked (GlcNAc...) asparagine glycan is attached at N835.

The protein belongs to the peptidase M28 family. Zn(2+) serves as cofactor.

Its subcellular location is the vacuole membrane. Functionally, may be involved in vacuolar sorting and osmoregulation. The protein is Vacuolar membrane protease of Arthroderma gypseum (strain ATCC MYA-4604 / CBS 118893) (Microsporum gypseum).